Here is a 312-residue protein sequence, read N- to C-terminus: Olfactory receptor 5P4 (312 aa).

Residues 1–25 (METENDTMVTEFIILGLTDSATLRA) lie on the Extracellular side of the membrane. N-linked (GlcNAc...) asparagine glycosylation is present at Asn-5. A helical membrane pass occupies residues 26 to 46 (ILFVFFLPVYIVTVVGNISII). Over 47–54 (LLIRSSPQ) the chain is Cytoplasmic. The chain crosses the membrane as a helical span at residues 55–75 (LHTPMYLFLSHLAFVDIGYST). Residues 76–99 (SVTPIMLISFLREETTIPLAGCAA) lie on the Extracellular side of the membrane. Cys-97 and Cys-189 are disulfide-bonded. A helical membrane pass occupies residues 100-120 (QLGSDVAFGTTECFLLATMAY). Over 121-133 (DRYVAICSPLLYS) the chain is Cytoplasmic. The chain crosses the membrane as a helical span at residues 134 to 154 (TQMSPAICCFLLGASYLGGCM). Over 155 to 196 (NASSFTGCFVNLNFCGPNKVNHFFCDLFPLVKLSCGHAYIAE) the chain is Extracellular. Residues 197–217 (ISPSISSASVLVSTLSTIIVS) traverse the membrane as a helical segment. Over 218 to 237 (YIYILHSILRMRSAEGRNKA) the chain is Cytoplasmic. Residues 238–258 (FSTCTSHLTAVTLFYGTVLFV) form a helical membrane-spanning segment. At 259–271 (YVMPKSSYSADQV) the chain is on the extracellular side. Residues 272-292 (KVASVVYTVVIPMLNPLIYSL) form a helical membrane-spanning segment. Residues 293-312 (RNKEVKEAMKKLMARTHWFP) are Cytoplasmic-facing.

This sequence belongs to the G-protein coupled receptor 1 family.

It localises to the cell membrane. Potential odorant receptor. The chain is Olfactory receptor 5P4 from Mus musculus (Mouse).